We begin with the raw amino-acid sequence, 1642 residues long: Cortactin-binding protein 2 (1642 aa).

5 disordered regions span residues 1-27 (MATD…AEAA), 203-222 (KKKT…RSTE), 366-433 (IGAS…HPGL), 446-471 (GSNA…SPTS), and 491-611 (RFTS…PSID). A coiled-coil region spans residues 119–276 (RKMQERMSTQ…EQLKRGTDSK (158 aa)). The span at 385-394 (GPSTGSTADL) shows a compositional bias: polar residues. Residues 395–407 (TSSPTPVPSTVSP) show a composition bias toward low complexity. Arg-491 carries the post-translational modification Asymmetric dimethylarginine. Positions 497–506 (AGAPPRPGAP) are enriched in pro residues. A compositionally biased stretch (polar residues) spans 576–586 (TVASPPSTLPQ). 6 ANK repeats span residues 702-732 (GRPT…DINY), 736-765 (DGHS…QVNA), 769-798 (NGFT…NINH), 802-831 (GGQT…DRSV), 835-864 (DGWT…PAHG), and 904-934 (EGWT…EPER). Residues 1441–1469 (SGAWRKVSTSPRKKSGRFSSPTWNKPDLS) are disordered. The residue at position 1513 (Ser-1513) is a Phosphoserine. A disordered region spans residues 1545–1642 (LRRFDSSGNN…NSRDLEPTQK (98 aa)). Polar residues-rich tracts occupy residues 1552–1563 (GNNPVFSATVNN) and 1571–1588 (KEVS…SNSK). Positions 1613–1627 (SQNTKRSSSSSNTRQ) are enriched in low complexity.

As to quaternary structure, interacts with CTTN/cortactin SH3 domain. Interacts with STRN, STRN4/zinedin and MOB4/phocein; this interactions mediate the association with the STRIPAK core complex and may regulate dendritic spine distribution of the STRIPAK complex in hippocampal neurons. Activation of glutamate receptors weakens the interaction with STRN and STRN4.

It localises to the cytoplasm. The protein localises to the cell cortex. The protein resides in the cell projection. It is found in the dendritic spine. Regulates the dendritic spine distribution of CTTN/cortactin in hippocampal neurons, and thus controls dendritic spinogenesis and dendritic spine maintenance. Associates with the striatin-interacting phosphatase and kinase (STRIPAK) core complex to regulate dendritic spine distribution of the STRIPAK complex in hippocampal neurons. This chain is Cortactin-binding protein 2 (CTTNBP2), found in Muntiacus muntjak (Barking deer).